We begin with the raw amino-acid sequence, 380 residues long: Cytochrome b (380 aa).

4 helical membrane-spanning segments follow: residues 34–54, 78–99, 114–134, and 179–199; these read FGSL…LLAM, WLIR…YFHI, WNTG…GYVL, and FFAL…IHLT. The heme b site is built by H84 and H98. Heme b-binding residues include H183 and H197. H202 serves as a coordination point for a ubiquinone. Helical transmembrane passes span 227–247, 289–309, 321–341, and 348–368; these read LKDI…ALFS, LGGV…PFLH, LSQL…WVGS, and FIII…VLFP.

Belongs to the cytochrome b family. As to quaternary structure, the cytochrome bc1 complex contains 11 subunits: 3 respiratory subunits (MT-CYB, CYC1 and UQCRFS1), 2 core proteins (UQCRC1 and UQCRC2) and 6 low-molecular weight proteins (UQCRH/QCR6, UQCRB/QCR7, UQCRQ/QCR8, UQCR10/QCR9, UQCR11/QCR10 and a cleavage product of UQCRFS1). This cytochrome bc1 complex then forms a dimer. Heme b is required as a cofactor.

Its subcellular location is the mitochondrion inner membrane. In terms of biological role, component of the ubiquinol-cytochrome c reductase complex (complex III or cytochrome b-c1 complex) that is part of the mitochondrial respiratory chain. The b-c1 complex mediates electron transfer from ubiquinol to cytochrome c. Contributes to the generation of a proton gradient across the mitochondrial membrane that is then used for ATP synthesis. This chain is Cytochrome b (MT-CYB), found in Halobaena caerulea (Blue petrel).